Reading from the N-terminus, the 295-residue chain is Protein PHR1-LIKE 2 (295 aa).

An HTH myb-type domain is found at 38-98; the sequence is TDPKPRLRWT…HLQKFRLGRQ (61 aa). Positions 69-94 form a DNA-binding region, H-T-H motif; that stretch reads PKTIMRTMGVKGLTLYHLKSHLQKFR. The interval 96 to 138 is disordered; sequence GRQAGKESTENSKDASCVGESQDTGSSSTSSMRMAQQEQNEGY. Positions 99 to 108 are enriched in basic and acidic residues; that stretch reads AGKESTENSK. The span at 127-138 shows a compositional bias: polar residues; the sequence is MRMAQQEQNEGY. Residues 141-161 adopt a coiled-coil conformation; sequence TEALRAQMEVQRRLHDQLEVQ. An LHEQLE motif is present at residues 154-159; it reads LHDQLE.

It belongs to the MYB-CC family. Homo- and heterodimers. Interacts with PHL3, but not with PHR1.

Its subcellular location is the nucleus. Its function is as follows. Transcriptional activator. Acts redundantly with PHR1 as a key component of the central regulatory system controlling transcriptional responses to Pi starvation. Binds in a sequence-specific manner to phosphate starvation-regulated promoters. In Arabidopsis thaliana (Mouse-ear cress), this protein is Protein PHR1-LIKE 2.